A 111-amino-acid polypeptide reads, in one-letter code: Cornifelin homolog (111 aa).

This sequence belongs to the cornifelin family.

The chain is Cornifelin homolog (cnfn) from Xenopus tropicalis (Western clawed frog).